Consider the following 88-residue polypeptide: ATP synthase subunit c (88 aa).

Transmembrane regions (helical) follow at residues 10–30 (ILAA…GPGI) and 68–88 (GIYS…IRLL).

This sequence belongs to the ATPase C chain family. As to quaternary structure, F-type ATPases have 2 components, F(1) - the catalytic core - and F(0) - the membrane proton channel. F(1) has five subunits: alpha(3), beta(3), gamma(1), delta(1), epsilon(1). F(0) has three main subunits: a(1), b(2) and c(10-14). The alpha and beta chains form an alternating ring which encloses part of the gamma chain. F(1) is attached to F(0) by a central stalk formed by the gamma and epsilon chains, while a peripheral stalk is formed by the delta and b chains.

The protein localises to the cell membrane. Its function is as follows. F(1)F(0) ATP synthase produces ATP from ADP in the presence of a proton or sodium gradient. F-type ATPases consist of two structural domains, F(1) containing the extramembraneous catalytic core and F(0) containing the membrane proton channel, linked together by a central stalk and a peripheral stalk. During catalysis, ATP synthesis in the catalytic domain of F(1) is coupled via a rotary mechanism of the central stalk subunits to proton translocation. In terms of biological role, key component of the F(0) channel; it plays a direct role in translocation across the membrane. A homomeric c-ring of between 10-14 subunits forms the central stalk rotor element with the F(1) delta and epsilon subunits. In Alkaliphilus oremlandii (strain OhILAs) (Clostridium oremlandii (strain OhILAs)), this protein is ATP synthase subunit c.